A 427-amino-acid chain; its full sequence is UPF0229 protein YeaH (427 aa).

Residues 87–110 are disordered; the sequence is RIERSQGGGGGSGSGQGQASQDGE. The span at 92 to 102 shows a compositional bias: gly residues; that stretch reads QGGGGGSGSGQ.

It belongs to the UPF0229 family.

The sequence is that of UPF0229 protein YeaH from Escherichia coli O6:K15:H31 (strain 536 / UPEC).